A 331-amino-acid chain; its full sequence is Ketol-acid reductoisomerase (NADP(+)) (331 aa).

The KARI N-terminal Rossmann domain occupies 2 to 182; sequence ARMYYDEDAN…GGTRGGVLET (181 aa). Residues 25–28, S51, S53, and 83–86 contribute to the NADP(+) site; these read YGSQ and DEVQ. H108 is an active-site residue. G134 lines the NADP(+) pocket. The KARI C-terminal knotted domain maps to 183 to 328; that stretch reads TFREETETDL…KDLRAMFSWL (146 aa). Residues D191, E195, E227, and E231 each contribute to the Mg(2+) site. S252 provides a ligand contact to substrate.

The protein belongs to the ketol-acid reductoisomerase family. The cofactor is Mg(2+).

The catalysed reaction is (2R)-2,3-dihydroxy-3-methylbutanoate + NADP(+) = (2S)-2-acetolactate + NADPH + H(+). It catalyses the reaction (2R,3R)-2,3-dihydroxy-3-methylpentanoate + NADP(+) = (S)-2-ethyl-2-hydroxy-3-oxobutanoate + NADPH + H(+). It functions in the pathway amino-acid biosynthesis; L-isoleucine biosynthesis; L-isoleucine from 2-oxobutanoate: step 2/4. It participates in amino-acid biosynthesis; L-valine biosynthesis; L-valine from pyruvate: step 2/4. Functionally, involved in the biosynthesis of branched-chain amino acids (BCAA). Catalyzes an alkyl-migration followed by a ketol-acid reduction of (S)-2-acetolactate (S2AL) to yield (R)-2,3-dihydroxy-isovalerate. In the isomerase reaction, S2AL is rearranged via a Mg-dependent methyl migration to produce 3-hydroxy-3-methyl-2-ketobutyrate (HMKB). In the reductase reaction, this 2-ketoacid undergoes a metal-dependent reduction by NADPH to yield (R)-2,3-dihydroxy-isovalerate. The sequence is that of Ketol-acid reductoisomerase (NADP(+)) from Trichormus variabilis (strain ATCC 29413 / PCC 7937) (Anabaena variabilis).